The sequence spans 305 residues: MSTLRIATRKSPLALWQAEHVAQQLKQHYPELTVELVPIVTQGDILAHTPLSKIGGKNLFIKELEIAMQQNAADIAVHSMKDVGVTLPEGFVLAAILPRENPFDALVSNHYAHLNELPNGARVGTCSLRRKMQLAHYRPDLKLIDIRGNVHTRLQKLDSGAFDALILACAGLIRLQQNARIRQILPAEISLPAIGQGAIGVECRADSPFLAHIQTLNHFETAVCVQTERVVNQRLQGDCQVPIAVFATLSGKTMTLQSRIGTIDGQRMLAHQEICALEDAEKAGARCAEALIQQGAQDILHEYRK.

At Cys239 the chain carries S-(dipyrrolylmethanemethyl)cysteine.

Belongs to the HMBS family. In terms of assembly, monomer. Dipyrromethane serves as cofactor.

It carries out the reaction 4 porphobilinogen + H2O = hydroxymethylbilane + 4 NH4(+). It functions in the pathway porphyrin-containing compound metabolism; protoporphyrin-IX biosynthesis; coproporphyrinogen-III from 5-aminolevulinate: step 2/4. In terms of biological role, tetrapolymerization of the monopyrrole PBG into the hydroxymethylbilane pre-uroporphyrinogen in several discrete steps. This Dichelobacter nodosus (strain VCS1703A) protein is Porphobilinogen deaminase.